The following is a 105-amino-acid chain: Flower-specific defensin (105 aa).

A signal peptide spans methionine 1 to alanine 25. Intrachain disulfides connect cysteine 28–cysteine 72, cysteine 39–cysteine 59, cysteine 45–cysteine 66, and cysteine 49–cysteine 68. Residues valine 73–asparagine 105 constitute a propeptide, removed in mature form.

This sequence belongs to the DEFL family. Most abundant in the epidermal cell layers of the petals and sepals, within the connective cells of the anthers, and the cortical cells of the style. Not detected in the tapetum, pollen mother cells, the transmitting tissue, the vascular bundles of the anther and style or in leaves. Expressed also in ovaries, but barley detectable in roots.

It is found in the secreted. Its subcellular location is the vacuole. Functionally, plant defense peptide with antifungal activity against F.oxysporum and B.cinerea. Retards the growth of the Lepidopteran insect pests H.armigera and H.punctigera. The chain is Flower-specific defensin (D1) from Nicotiana alata (Winged tobacco).